Consider the following 268-residue polypeptide: MSTFVAGGNVSANGIRQHYLRYGGKGHALILVPGITSPAITWGFVAERLGHYFDTYVLDVRGRGLSSSGPDLDYGTDACAADIPAFAAALGLDSYHLLGHSMGARFAIRAAAQGAPGLQRLVLVDPPVSGPGRRAYPSKLPWYVDSIRQATVGMSGDDMRAFCATWSDEQLALRAEWLHTCYEPAIVRAFDDFHEVDIHQYLPAVRQPALLMVAGRGGVIEPRDIAEMRELKPDIQVAYVDNAGHMIPWDDLDGFFAAFGDFLDHPLV.

One can recognise an AB hydrolase-1 domain in the interval 28–251 (ALILVPGITS…NAGHMIPWDD (224 aa)). Catalysis depends on charge relay system residues Ser101, Glu221, and His245.

It catalyses the reaction N-formylmaleamate + H2O = maleamate + formate + H(+). Its pathway is cofactor degradation; nicotinate degradation. Its function is as follows. Deformylase that catalyzes the conversion of N-formylmaleamic acid to maleamate in the aerobic nicotinate degradation pathway. The protein is N-formylmaleamate deformylase (nicD) of Pseudomonas putida (strain ATCC 47054 / DSM 6125 / CFBP 8728 / NCIMB 11950 / KT2440).